Here is a 144-residue protein sequence, read N- to C-terminus: Large ribosomal subunit protein uL11 (144 aa).

It belongs to the universal ribosomal protein uL11 family. In terms of assembly, part of the ribosomal stalk of the 50S ribosomal subunit. Interacts with L10 and the large rRNA to form the base of the stalk. L10 forms an elongated spine to which L12 dimers bind in a sequential fashion forming a multimeric L10(L12)X complex. In terms of processing, one or more lysine residues are methylated.

Its function is as follows. Forms part of the ribosomal stalk which helps the ribosome interact with GTP-bound translation factors. The polypeptide is Large ribosomal subunit protein uL11 (Gluconobacter oxydans (strain 621H) (Gluconobacter suboxydans)).